A 362-amino-acid polypeptide reads, in one-letter code: Chalcone synthase A (362 aa).

Cys-168 is a catalytic residue.

The protein belongs to the thiolase-like superfamily. Chalcone/stilbene synthases family.

It catalyses the reaction (E)-4-coumaroyl-CoA + 3 malonyl-CoA + 3 H(+) = 2',4,4',6'-tetrahydroxychalcone + 3 CO2 + 4 CoA. The protein operates within secondary metabolite biosynthesis; flavonoid biosynthesis. Functionally, the primary product of this enzyme is 4,2',4',6'-tetrahydroxychalcone (also termed naringenin-chalcone or chalcone) which can under specific conditions spontaneously isomerize into naringenin. This is Chalcone synthase A (CHSA) from Ipomoea platensis (Morning glory).